The sequence spans 109 residues: MKGQKSYRIKKNDTVMVVTGKDKGKSGKVLRVIYKKDRAIVEKLNMIKRHMKPSQQNRQGGILEKESPIHISNLMLICAKCTDPTRVGYKVLDDNKKVRFCKKCNEVID.

This sequence belongs to the universal ribosomal protein uL24 family. Part of the 50S ribosomal subunit.

In terms of biological role, one of two assembly initiator proteins, it binds directly to the 5'-end of the 23S rRNA, where it nucleates assembly of the 50S subunit. Its function is as follows. One of the proteins that surrounds the polypeptide exit tunnel on the outside of the subunit. This chain is Large ribosomal subunit protein uL24, found in Syntrophobacter fumaroxidans (strain DSM 10017 / MPOB).